The sequence spans 149 residues: MTDALSEEQIAEFKEAFSLFDKDGDGTITTKELGTVMRSLGQNPTEAELQDMINEVDADGNGTIDFPEFLTMMARKMKETDSEEEIREAFRVFDKDGNGFISAAELRHVMTNLGEKLTDEEVDEMIREADIDGDGQVNYEEFVAMMTSK.

Thr2 is modified (N-acetylthreonine). EF-hand domains are found at residues 8 to 43 (EQIAEFKEAFSLFDKDGDGTITTKELGTVMRSLGQN), 44 to 79 (PTEAELQDMINEVDADGNGTIDFPEFLTMMARKMKE), 81 to 116 (DSEEEIREAFRVFDKDGNGFISAAELRHVMTNLGEK), and 117 to 149 (LTDEEVDEMIREADIDGDGQVNYEEFVAMMTSK). Residues Asp21, Asp23, Asp25, Thr27, Glu32, Asp57, Asp59, Asn61, Thr63, Glu68, Asp94, Asp96, Asn98, and Glu105 each contribute to the Ca(2+) site. N6,N6,N6-trimethyllysine is present on Lys116. Ca(2+) is bound by residues Asp130, Asp132, Asp134, Gln136, and Glu141.

This sequence belongs to the calmodulin family.

Its function is as follows. Calmodulin mediates the control of a large number of enzymes, ion channels and other proteins by Ca(2+). Among the enzymes to be stimulated by the calmodulin-Ca(2+) complex are a number of protein kinases and phosphatases. In Halichondria okadai (Marine sponge), this protein is Calmodulin.